The primary structure comprises 413 residues: MQKRVVVLLLDSFGIGASEDAKDFGDFGANTLGNIAKACFNNLANSNDRNGALKLPYLESLGLGLSALKATNELPLGFESKPNLIGAYAYAKELSSAKDTISGHWEMMGAPVLFEWGYFKDKTHSFPKEILDEIMHKTKIKGYLGNCHASGTEIIKDLGEKHLETLYPIFYTSADSVFQIAAHEEKFGLDNLYALCEEVFQILEPLKIARVIARPFIGANREDFKRTAKRKDYAIKPHKKLLFEKFIEEKQGEVISIGKIADIYAHVGITQKFKAGSLMELCDVTLDQVKNAKNNSLIFTNFVHFDSDYGHRRDISGYANALEYFDTRLKEVLENLKENDLLILCADHGCDPSFKGTDHTREYIPVLFYHKDLQPAFLGKSESFADIGQSIAYFLGLSPLDYGKNLLKFKGQP.

Aspartate 11, aspartate 306, histidine 311, aspartate 347, histidine 348, and histidine 359 together coordinate Mn(2+).

Belongs to the phosphopentomutase family. Mn(2+) serves as cofactor.

It localises to the cytoplasm. It catalyses the reaction 2-deoxy-alpha-D-ribose 1-phosphate = 2-deoxy-D-ribose 5-phosphate. It carries out the reaction alpha-D-ribose 1-phosphate = D-ribose 5-phosphate. It participates in carbohydrate degradation; 2-deoxy-D-ribose 1-phosphate degradation; D-glyceraldehyde 3-phosphate and acetaldehyde from 2-deoxy-alpha-D-ribose 1-phosphate: step 1/2. Functionally, isomerase that catalyzes the conversion of deoxy-ribose 1-phosphate (dRib-1-P) and ribose 1-phosphate (Rib-1-P) to deoxy-ribose 5-phosphate (dRib-5-P) and ribose 5-phosphate (Rib-5-P), respectively. The chain is Phosphopentomutase from Helicobacter pylori (strain G27).